A 70-amino-acid polypeptide reads, in one-letter code: Small ribosomal subunit protein bS21 (70 aa).

The protein belongs to the bacterial ribosomal protein bS21 family.

The sequence is that of Small ribosomal subunit protein bS21 from Polynucleobacter asymbioticus (strain DSM 18221 / CIP 109841 / QLW-P1DMWA-1) (Polynucleobacter necessarius subsp. asymbioticus).